A 90-amino-acid chain; its full sequence is Serine protease inhibitor Cvsi-1 (90 aa).

Residues 1-19 form the signal peptide; that stretch reads MDVVRTLILCVCLFGLTFA.

Contains 6 disulfide bonds. As to expression, detected in hemolymph (at protein level). In oysters collected in the summer the expression level is highest in the digestive gland with low levels of expression in gill, mantle, labial palp, style-sac midgut, gonad, heart, and hemocyte. In winter expression levels are higher in all tissues with highest expression levels observed in the digestive gland. Within the digestive gland expression is limited to the basophil cells of the digestive diverticula.

It localises to the secreted. Slow-binding inhibitor of serine proteases. The inhibitor rapidly binds to the protease forming a weak enzyme-inhibitor complex, and this is followed by a slow isomerization forming a tight-binding enzyme-inhibitor complex. Active against subtilisin A, perkinsin and trypsin with dissociation constants of 0.29 nM, 13.7 nM and 17.7 nM respectively. Not active against thermolysin, papain or pepsin. Has antiparasitic activity against the protozoan P.marinus. The protein is Serine protease inhibitor Cvsi-1 of Crassostrea virginica (Eastern oyster).